Here is a 179-residue protein sequence, read N- to C-terminus: ATP synthase subunit delta (179 aa).

It belongs to the ATPase delta chain family. In terms of assembly, F-type ATPases have 2 components, F(1) - the catalytic core - and F(0) - the membrane proton channel. F(1) has five subunits: alpha(3), beta(3), gamma(1), delta(1), epsilon(1). F(0) has three main subunits: a(1), b(2) and c(10-14). The alpha and beta chains form an alternating ring which encloses part of the gamma chain. F(1) is attached to F(0) by a central stalk formed by the gamma and epsilon chains, while a peripheral stalk is formed by the delta and b chains.

It localises to the cell inner membrane. F(1)F(0) ATP synthase produces ATP from ADP in the presence of a proton or sodium gradient. F-type ATPases consist of two structural domains, F(1) containing the extramembraneous catalytic core and F(0) containing the membrane proton channel, linked together by a central stalk and a peripheral stalk. During catalysis, ATP synthesis in the catalytic domain of F(1) is coupled via a rotary mechanism of the central stalk subunits to proton translocation. Functionally, this protein is part of the stalk that links CF(0) to CF(1). It either transmits conformational changes from CF(0) to CF(1) or is implicated in proton conduction. This is ATP synthase subunit delta from Burkholderia lata (strain ATCC 17760 / DSM 23089 / LMG 22485 / NCIMB 9086 / R18194 / 383).